The sequence spans 640 residues: 1-deoxy-D-xylulose-5-phosphate synthase (640 aa).

Residues H79 and 120 to 122 (AHS) each bind thiamine diphosphate. Residue D151 coordinates Mg(2+). Residues 152 to 153 (GA), N180, Y289, and E371 contribute to the thiamine diphosphate site. Residue N180 coordinates Mg(2+).

The protein belongs to the transketolase family. DXPS subfamily. Homodimer. Mg(2+) serves as cofactor. The cofactor is thiamine diphosphate.

It carries out the reaction D-glyceraldehyde 3-phosphate + pyruvate + H(+) = 1-deoxy-D-xylulose 5-phosphate + CO2. It functions in the pathway metabolic intermediate biosynthesis; 1-deoxy-D-xylulose 5-phosphate biosynthesis; 1-deoxy-D-xylulose 5-phosphate from D-glyceraldehyde 3-phosphate and pyruvate: step 1/1. Its function is as follows. Catalyzes the acyloin condensation reaction between C atoms 2 and 3 of pyruvate and glyceraldehyde 3-phosphate to yield 1-deoxy-D-xylulose-5-phosphate (DXP). This chain is 1-deoxy-D-xylulose-5-phosphate synthase, found in Novosphingobium aromaticivorans (strain ATCC 700278 / DSM 12444 / CCUG 56034 / CIP 105152 / NBRC 16084 / F199).